We begin with the raw amino-acid sequence, 353 residues long: MTEPLKPRIDFDGPLEVDQNPKFRAQQTFDENQAQNFAPATLDEAPEEEGQVEAVMDAALRPKRSLWRKMVMGGLALFGASVVGQGVQWTMNAWQTQDWVALGGCAAGALIIGAGVGSVVTEWRRLWRLRQRAHERDEARDLLHSHGTGKGRAFCEKLAQQAGIDQSHPALQRWYASIHETQNDREVVSLYAHLVQPVLDAQARREICRSAAESTLMIAVSPLALVDMAFIAWRNLRLINRIATLYGIELGYYSRLRLFKLVLLNIAFAGASELVREVGMDWMSQDLAARLSTRAAQGIGAGLLTARLGIKAMELCRPLPWIDDDKPRLGDFRRQLIGQVKETLQKGKTPSEK.

Helical transmembrane passes span 70–90, 100–120, and 213–233; these read MVMG…VQWT, VALG…GSVV, and ESTL…FIAW.

This sequence belongs to the UPF0283 family.

Its subcellular location is the cell inner membrane. The protein is UPF0283 membrane protein YcjF of Shigella boydii serotype 4 (strain Sb227).